A 149-amino-acid polypeptide reads, in one-letter code: MLSPKRVKFRKQQRGRMRGIATRGNTIAFGQFALQAQECGWITSRQIEASRRAMTRYVKRGGRIWIRVFPDKPVTMRAAETRMGSGKGNPEFWVAVIKPGRILFEMGGPEITETIAREAMRLAQYKLPLKTKFLILNSQESETLVTPEV.

The protein belongs to the universal ribosomal protein uL16 family. As to quaternary structure, part of the 50S ribosomal subunit.

The protein resides in the plastid. Its subcellular location is the organellar chromatophore. The protein is Large ribosomal subunit protein uL16c (rpl16) of Paulinella chromatophora.